A 159-amino-acid polypeptide reads, in one-letter code: 2-C-methyl-D-erythritol 2,4-cyclodiphosphate synthase (159 aa).

A divalent metal cation-binding residues include Asp8 and His10. 4-CDP-2-C-methyl-D-erythritol 2-phosphate contacts are provided by residues 8–10 (DVH) and 34–35 (HS). His42 lines the a divalent metal cation pocket. Residues 56 to 58 (DIG), 61 to 65 (FPDTD), 100 to 106 (AQAPKML), 132 to 135 (TTTE), Phe139, and Arg142 contribute to the 4-CDP-2-C-methyl-D-erythritol 2-phosphate site.

This sequence belongs to the IspF family. Homotrimer. A divalent metal cation is required as a cofactor.

It carries out the reaction 4-CDP-2-C-methyl-D-erythritol 2-phosphate = 2-C-methyl-D-erythritol 2,4-cyclic diphosphate + CMP. Its pathway is isoprenoid biosynthesis; isopentenyl diphosphate biosynthesis via DXP pathway; isopentenyl diphosphate from 1-deoxy-D-xylulose 5-phosphate: step 4/6. Involved in the biosynthesis of isopentenyl diphosphate (IPP) and dimethylallyl diphosphate (DMAPP), two major building blocks of isoprenoid compounds. Catalyzes the conversion of 4-diphosphocytidyl-2-C-methyl-D-erythritol 2-phosphate (CDP-ME2P) to 2-C-methyl-D-erythritol 2,4-cyclodiphosphate (ME-CPP) with a corresponding release of cytidine 5-monophosphate (CMP). This Escherichia coli O139:H28 (strain E24377A / ETEC) protein is 2-C-methyl-D-erythritol 2,4-cyclodiphosphate synthase.